The following is a 451-amino-acid chain: POU domain, class 3, transcription factor 1 (451 aa).

Disordered regions lie at residues methionine 1 to proline 21, alanine 69 to alanine 114, alanine 134 to glutamine 154, glycine 186 to aspartate 253, and lysine 395 to glutamine 451. Composition is skewed to gly residues over residues glycine 11 to glycine 20, threonine 76 to alanine 85, and alanine 95 to phenylalanine 112. Low complexity predominate over residues alanine 134–proline 145. Residues alanine 190 to glutamine 199 show a composition bias toward basic and acidic residues. The span at alanine 220–proline 232 shows a compositional bias: low complexity. Residues glutamate 247–aspartate 321 enclose the POU-specific domain. The segment at residues lysine 339–threonine 398 is a DNA-binding region (homeobox). The segment covering proline 427–alanine 436 has biased composition (pro residues).

It belongs to the POU transcription factor family. Class-3 subfamily. As to expression, neural tissues and testis.

It is found in the nucleus. Its function is as follows. Transcription factor that binds to the octamer motif (5'-ATTTGCAT-3'). Acts as a transcriptional activator when binding cooperatively with SOX4, SOX11, or SOX12 to gene promoters. Acts as a transcriptional repressor of myelin-specific genes. This chain is POU domain, class 3, transcription factor 1 (Pou3f1), found in Rattus norvegicus (Rat).